The following is a 347-amino-acid chain: Dihydroorotase (347 aa).

Zn(2+)-binding residues include His-14 and His-16. Substrate-binding positions include 16–18 (HLR) and Asn-42. The Zn(2+) site is built by Lys-100, His-137, and His-175. Position 100 is an N6-carboxylysine (Lys-100). His-137 contacts substrate. A substrate-binding site is contributed by Leu-220. Zn(2+) is bound at residue Asp-248. Residue Asp-248 is part of the active site. Residues His-252 and Ala-264 each contribute to the substrate site.

The protein belongs to the metallo-dependent hydrolases superfamily. DHOase family. Class II DHOase subfamily. As to quaternary structure, homodimer. Zn(2+) serves as cofactor.

It catalyses the reaction (S)-dihydroorotate + H2O = N-carbamoyl-L-aspartate + H(+). It functions in the pathway pyrimidine metabolism; UMP biosynthesis via de novo pathway; (S)-dihydroorotate from bicarbonate: step 3/3. Catalyzes the reversible cyclization of carbamoyl aspartate to dihydroorotate. The polypeptide is Dihydroorotase (Jannaschia sp. (strain CCS1)).